The primary structure comprises 540 residues: MAKDLKFSEDARQSMLRGVDKLANAVKVTIGPKGRNVVLDKEYTSPLITNDGVTIAKEIELEDPYENMGAKLVQEVANKTNEIAGDGTTTATVLAQAMIQEGLKNVTSGANPVGLRQGIDKAVEVAIEALHEISQNVDNKNEIAQVGSISAADEEIGKYISEAMEKVGNDGVITIEESSGFNTELEVVEGMQFDRGYQSPYMVTDSDKMVADLERPYILITDKKISSFQDILPLLEQVVQSNRPILIVADDVEGDALTNIVLNRMRGTFTAVAVKAPGFGDRRKAMLEDLAILTGAQVITDDLGLELKEATMDMLGTANKAEITKDNTTVVDGDGDQNSIDARVSQIKAQIEETDSEFDKEKLQERLAKLAGGVAVIKVGAASETELKERKLRIEDALNSTRAAVEEGIVAGGGTAFMNIYEKVAKIEAEGDIATGINIVLKALEAPVRQIAENAGLEGSIIVERLKNADIGVGFNAATNEWVNMLEAGIVDPTKVTRSSLQHAASVAAMFLTTEAVVANIPEESNNDAQAGMGGMPGMM.

ATP contacts are provided by residues 29–32, 86–90, glycine 413, 476–478, and aspartate 492; these read TIGP, DGTTT, and NAA.

The protein belongs to the chaperonin (HSP60) family. Forms a cylinder of 14 subunits composed of two heptameric rings stacked back-to-back. Interacts with the co-chaperonin GroES.

The protein resides in the cytoplasm. It carries out the reaction ATP + H2O + a folded polypeptide = ADP + phosphate + an unfolded polypeptide.. Together with its co-chaperonin GroES, plays an essential role in assisting protein folding. The GroEL-GroES system forms a nano-cage that allows encapsulation of the non-native substrate proteins and provides a physical environment optimized to promote and accelerate protein folding. This Staphylococcus saprophyticus subsp. saprophyticus (strain ATCC 15305 / DSM 20229 / NCIMB 8711 / NCTC 7292 / S-41) protein is Chaperonin GroEL.